Here is a 315-residue protein sequence, read N- to C-terminus: Heme oxygenase 2 (315 aa).

Acidic residues predominate over residues 1–12; it reads MSSEVETSEGVD. The interval 1-28 is disordered; the sequence is MSSEVETSEGVDESEKNSMAPEKENHTK. Ser-2 is modified (N-acetylserine). The residue at position 2 (Ser-2) is a Phosphoserine. Topologically, residues 2 to 294 are cytoplasmic; it reads SSEVETSEGV…TTVAVLRKPS (293 aa). Over residues 13 to 28 the composition is skewed to basic and acidic residues; it reads ESEKNSMAPEKENHTK. Heme b contacts are provided by His-44, Tyr-153, Lys-198, and Arg-202. 2 HRM repeats span residues 263 to 268 and 280 to 285; these read KCPFYA and NCPFQT. 2 positions are modified to S-nitrosocysteine: Cys-264 and Cys-281. The chain crosses the membrane as a helical; Anchor for type IV membrane protein span at residues 295 to 315; that stretch reads LQLILAASVALVAGLLAWYYM.

The protein belongs to the heme oxygenase family. In terms of processing, a soluble form arises by proteolytic removal of the membrane anchor. S-nitrosylated by BLVRB. In terms of tissue distribution, ubiquitous.

It localises to the microsome membrane. The protein resides in the endoplasmic reticulum membrane. It carries out the reaction heme b + 3 reduced [NADPH--hemoprotein reductase] + 3 O2 = biliverdin IXalpha + CO + Fe(2+) + 3 oxidized [NADPH--hemoprotein reductase] + 3 H2O + H(+). In terms of biological role, catalyzes the oxidative cleavage of heme at the alpha-methene bridge carbon, released as carbon monoxide (CO), to generate biliverdin IXalpha, while releasing the central heme iron chelate as ferrous iron. The chain is Heme oxygenase 2 (Hmox2) from Mus musculus (Mouse).